We begin with the raw amino-acid sequence, 685 residues long: Frizzled-8 (685 aa).

A signal peptide spans 1–27 (MEWGYLLEVTSLLAALAVLQRSSGAAA). At 28-272 (ASAKELACQE…NPFFSQDERA (245 aa)) the chain is on the extracellular side. One can recognise an FZ domain in the interval 30–151 (AKELACQEIT…GNPDTLCMDY (122 aa)). Cystine bridges form between Cys35/Cys96, Cys43/Cys89, Cys80/Cys118, Cys107/Cys148, and Cys111/Cys135. Asn49 carries an N-linked (GlcNAc...) asparagine glycan. 71–78 (QFWPLVEI) contributes to the hexadecanoate binding site. The wnt-binding stretch occupies residues 95–100 (ICLEDY). Positions 147–152 (LCMDYN) are wnt-binding. N-linked (GlcNAc...) asparagine glycosylation occurs at Asn152. The interval 155-223 (DLTTAAPSPP…KARPPGGGAA (69 aa)) is disordered. The segment covering 161–176 (PSPPRRLPPPPPPGEQ) has biased composition (pro residues). 2 stretches are compositionally biased toward low complexity: residues 177–187 (PPSGSGHSRPP) and 200–223 (GSGDAAAAPPSRGGKARPPGGGAA). The helical transmembrane segment at 273–293 (FTVFWIGLWSVLCFVSTFATV) threads the bilayer. The Cytoplasmic segment spans residues 294–309 (STFLIDMERFKYPERP). A helical transmembrane segment spans residues 310 to 330 (IIFLSACYLFVSVGYLVRLVA). Over 331 to 394 (GHEKVACSGG…RYETTGPALC (64 aa)) the chain is Extracellular. Residues 395–415 (TVVFLLVYFFGMASSIWWVIL) form a helical membrane-spanning segment. The Cytoplasmic segment spans residues 416-437 (SLTWFLAAGMKWGNEAIAGYSQ). The helical transmembrane segment at 438–458 (YFHLAAWLVPSVKSIAVLALS) threads the bilayer. Over 459–481 (SVDGDPVAGICYVGNQSLDNLRG) the chain is Extracellular. A glycan (N-linked (GlcNAc...) asparagine) is linked at Asn473. Residues 482–502 (FVLAPLVIYLFIGTMFLLAGF) traverse the membrane as a helical segment. At 503-530 (VSLFRIRSVIKQQGGPTKTHKLEKLMIR) the chain is on the cytoplasmic side. The chain crosses the membrane as a helical span at residues 531-551 (LGLFTVLYTVPAAVVVACLFY). At 552–582 (EQHNRPRWEATHNCPCLRDLQPDQARRPDYA) the chain is on the extracellular side. The chain crosses the membrane as a helical span at residues 583–603 (VFMLKYFMCLVVGITSGVWVW). Topologically, residues 604–685 (SGKTLESWRA…YPKQMPLSQV (82 aa)) are cytoplasmic. A Lys-Thr-X-X-X-Trp motif, mediates interaction with the PDZ domain of Dvl family members motif is present at residues 606–611 (KTLESW). The segment covering 631–655 (AGGSGPGGSGPGPGGGGGHGGGGGS) has biased composition (gly residues). Positions 631–656 (AGGSGPGGSGPGPGGGGGHGGGGGSL) are disordered. The short motif at 683–685 (SQV) is the PDZ-binding element.

The protein belongs to the G-protein coupled receptor Fz/Smo family. As to quaternary structure, component of a Wnt-signaling complex that contains a WNT protein, a FZD protein and LRP5 or LRP6. Interacts directly with LRP5 or LRP6; the interaction is promoted by Wnt-binding and signaling and inhibited by DKK1. Interacts (via the PDZ-binding motif) with GPOC (via its PDZ domain). Interacts with RSPO1 and RSPO3. Interacts with glypican GPC3. Ubiquitinated by ZNRF3, leading to its degradation by the proteasome. In terms of tissue distribution, expressed in chondrocytes.

It is found in the membrane. The protein localises to the golgi apparatus. The protein resides in the cell membrane. In terms of biological role, receptor for Wnt proteins. Component of the Wnt-Fzd-LRP5-LRP6 complex that triggers beta-catenin signaling through inducing aggregation of receptor-ligand complexes into ribosome-sized signalosomes. The beta-catenin canonical signaling pathway leads to the activation of disheveled proteins, inhibition of GSK-3 kinase, nuclear accumulation of beta-catenin and activation of Wnt target genes. A second signaling pathway involving PKC and calcium fluxes has been seen for some family members, but it is not yet clear if it represents a distinct pathway or if it can be integrated in the canonical pathway, as PKC seems to be required for Wnt-mediated inactivation of GSK-3 kinase. Both pathways seem to involve interactions with G-proteins. May be involved in transduction and intercellular transmission of polarity information during tissue morphogenesis and/or in differentiated tissues. Coreceptor along with RYK of Wnt proteins, such as WNT1. The sequence is that of Frizzled-8 (Fzd8) from Mus musculus (Mouse).